The sequence spans 388 residues: D-alanyl-D-alanine carboxypeptidase DacD (388 aa).

The signal sequence occupies residues 1–21 (MKRRLIIAASLFVFNLSSGFA). Residue Ser-63 is the Acyl-ester intermediate of the active site. Lys-66 (proton acceptor) is an active-site residue. Ser-129 is a catalytic residue. Substrate is bound at residue Lys-232.

The protein belongs to the peptidase S11 family.

It localises to the cell inner membrane. It catalyses the reaction Preferential cleavage: (Ac)2-L-Lys-D-Ala-|-D-Ala. Also transpeptidation of peptidyl-alanyl moieties that are N-acyl substituents of D-alanine.. It functions in the pathway cell wall biogenesis; peptidoglycan biosynthesis. Functionally, removes C-terminal D-alanyl residues from sugar-peptide cell wall precursors. In Escherichia coli (strain K12), this protein is D-alanyl-D-alanine carboxypeptidase DacD (dacD).